The following is a 409-amino-acid chain: Elongation factor Tu, plastid (409 aa).

Positions 10-214 constitute a tr-type G domain; it reads KPHINIGTIG…SVDSYIPTPV (205 aa). The G1 stretch occupies residues 19–26; sequence GHVDHGKT. GTP is bound at residue 19–26; sequence GHVDHGKT. T26 is a binding site for Mg(2+). A G2 region spans residues 60 to 64; sequence GITIN. The interval 81-84 is G3; it reads DCPG. GTP-binding positions include 81–85 and 136–139; these read DCPGH and NKED. The tract at residues 136 to 139 is G4; it reads NKED. The interval 174–176 is G5; it reads SAL.

It belongs to the TRAFAC class translation factor GTPase superfamily. Classic translation factor GTPase family. EF-Tu/EF-1A subfamily.

It is found in the plastid. It catalyses the reaction GTP + H2O = GDP + phosphate + H(+). In terms of biological role, GTP hydrolase that promotes the GTP-dependent binding of aminoacyl-tRNA to the A-site of ribosomes during protein biosynthesis. The polypeptide is Elongation factor Tu, plastid (tufA) (Helicosporidium sp. subsp. Simulium jonesii (Green alga)).